Consider the following 237-residue polypeptide: DNA repair protein RecO (237 aa).

Belongs to the RecO family.

Functionally, involved in DNA repair and RecF pathway recombination. The polypeptide is DNA repair protein RecO (Cereibacter sphaeroides (strain ATCC 17025 / ATH 2.4.3) (Rhodobacter sphaeroides)).